A 732-amino-acid chain; its full sequence is Interleukin-31 receptor subunit alpha (732 aa).

Positions 1–19 (MMWTWALWMLPSLCKFSLA) are cleaved as a signal peptide. Residues 20-519 (ALPAKPENIS…FKTLSFSVFE (500 aa)) lie on the Extracellular side of the membrane. Fibronectin type-III domains are found at residues 24–122 (KPEN…IAKT), 124–225 (PPKI…TEEE), 223–315 (EEEA…PVAT), 319–416 (PAIQ…QAYA), and 421–515 (PSEG…TLSF). N-linked (GlcNAc...) asparagine glycans are attached at residues asparagine 37, asparagine 67, asparagine 93, asparagine 166, asparagine 187, asparagine 277, asparagine 283, asparagine 395, asparagine 455, and asparagine 504. A helical membrane pass occupies residues 520–540 (IILITSLIGGGLLILIILTVA). The Cytoplasmic portion of the chain corresponds to 541 to 732 (YGLKKPNKLT…KLPEHTKGEV (192 aa)).

Belongs to the type I cytokine receptor family. Type 2 subfamily. Heterodimer with OSMR. Interacts with JAK1 and STAT3. Post-translationally, N-glycosylated. In terms of tissue distribution, expressed in CD14- and CD56-positive blood cells. Expressed in macrophages. Expressed in keratinocytes. Expressed in a subset of dorsal root ganglia neurons (at protein level). Expressed at low levels in testis, ovary, brain, prostate, placenta, thymus, bone marrow, trachea and skin. Expressed in bronchial and alveolar epithelial cells and pulmonary fibroblasts. Detected in all of the myelomonocytic lineage. Isoform 6: Expressed at higher levels in lesional skin compared to healthy skin of atopic dermatitis patients.

The protein resides in the cell membrane. The protein localises to the presynaptic cell membrane. It localises to the cell projection. Its subcellular location is the axon. Functionally, associates with OSMR to form the interleukin-31 receptor which activates STAT3 and to a lower extent STAT1 and STAT5. May function in skin immunity. Mediates IL31-induced itch, probably in a manner dependent on cation channels TRPA1 and TRPV1. Positively regulates numbers and cycling status of immature subsets of myeloid progenitor cells in bone marrow in vivo and enhances myeloid progenitor cell survival in vitro. The sequence is that of Interleukin-31 receptor subunit alpha (IL31RA) from Homo sapiens (Human).